Consider the following 149-residue polypeptide: Secreted RxLR effector protein 47 (149 aa).

The N-terminal stretch at 1 to 22 (MICLLPLIAVMLFVFATHTVLA) is a signal peptide. Positions 57–79 (RFLRQETTFEEKPSVNDVHAEER) match the RxLR-dEER motif.

The protein belongs to the RxLR effector family.

It is found in the secreted. The protein localises to the host membrane. Functionally, secreted effector that completely suppresses the host cell death induced by cell death-inducing proteins. This Plasmopara viticola (Downy mildew of grapevine) protein is Secreted RxLR effector protein 47.